A 213-amino-acid chain; its full sequence is Peroxisomal protein 2 (213 aa).

The Peroxisomal target signal 1 (PTS1) motif lies at 211–213 (ETL).

This sequence belongs to the PXP2 family.

It is found in the peroxisome matrix. It localises to the cytoplasm. The protein localises to the cytosol. The protein resides in the nucleus. In terms of biological role, probably involved in peroxisome formation or maintenance as well as in amino acid metabolism. The polypeptide is Peroxisomal protein 2 (Schizosaccharomyces pombe (strain 972 / ATCC 24843) (Fission yeast)).